Here is a 683-residue protein sequence, read N- to C-terminus: MALLMRLLTLALALSVGPAGTLAGPAKSPYQLVLQHSRLRGRQHGPNVCAVQKVIGTNKKYFTNCKQWYQRKICGKSTVISYECCPGYEKVPGEKGCPAALPLSNLYETMGVVGSTTTQLYTDRTEKLRPEMEGPGSFTIFAPSNEAWSSLPAEVLDSLVSNVNIELLNALRYHMVDRRVLTDELKHGMTLTSMYQNSNIQIHHYPNGIVTVNCARLLKADHHATNGVVHLIDKVISTITNNIQQIIEIEDTFETLRAAVAASGLNTVLEGDGQFTLLAPTNEAFEKIPAETLNRILGDPEALRDLLNNHILKSAMCAEAIVAGMSMETLGGTTLEVGCSGDKLTINGKAVISNKDILATNGVIHFIDELLIPDSAKTLLELAGESDVSTAIDILKQAGLDTHLSGKEQLTFLAPLNSVFKDGVPRIDAQMKTLLLNHMVKEQLASKYLYSGQTLDTLGGKKLRVFVYRNSLCIENSCIAAHDKRGRFGTLFTMDRMLTPPMGTVMDVLKGDNRFSMLVAAIQSAGLMEILNREGVYTVFAPTNEAFQAMPPEELNKLLANAKELTNILKYHIGDEILVSGGIGALVRLKSLQGDKLEVSSKNNVVSVNKEPVAETDIMATNGVVYAINTVLQPPANRPQERGDELADSALEIFKQASAYSRAAQRSVRLAPVYQRLLERMKH.

The first 23 residues, 1–23 (MALLMRLLTLALALSVGPAGTLA), serve as a signal peptide directing secretion. Phosphoserine is present on S37. The EMI domain maps to 45–99 (GPNVCAVQKVIGTNKKYFTNCKQWYQRKICGKSTVISYECCPGYEKVPGEKGCPA). Disulfide bonds link C49-C85, C74-C339, C84-C97, C214-C317, and C473-C478. C65 is subject to S-cysteinyl cysteine. FAS1 domains lie at 103–236 (LSNL…DKVI), 240–371 (TNNI…DELL), 375–498 (SAKT…DRML), and 502–632 (MGTV…NTVL). The Cell attachment site signature appears at 642–644 (RGD).

As to quaternary structure, binds to type I, II, and IV collagens. Gamma-carboxylation is controversial. Gamma-carboxyglutamated; gamma-carboxyglutamate residues are formed by vitamin K dependent carboxylation; this may be required for calcium binding. According to a more recent report, does not contain vitamin K-dependent gamma-carboxyglutamate residues. In terms of processing, the EMI domain contains 2 expected intradomain disulfide bridges (Cys-49-Cys85 and Cys-84-Cys-97) and one unusual interdomain disulfide bridge to the second FAS1 domain (Cys-74-Cys-339). This arrangement violates the predicted disulfide bridge pattern of an EMI domain. Expressed in heart, kidney, liver, skeletal muscle, testis, thyroid and uterus.

The protein resides in the secreted. Its subcellular location is the extracellular space. It localises to the extracellular matrix. Functionally, plays a role in cell adhesion. May play a role in cell-collagen interactions. This Mus musculus (Mouse) protein is Transforming growth factor-beta-induced protein ig-h3 (Tgfbi).